A 304-amino-acid chain; its full sequence is N-acetylmuramic acid 6-phosphate etherase (304 aa).

An SIS domain is found at 62–225; the sequence is IVQAFQNGGR…TTASMVMIGK (164 aa). E90 serves as the catalytic Proton donor. The active site involves E121.

This sequence belongs to the GCKR-like family. MurNAc-6-P etherase subfamily. Homodimer.

The enzyme catalyses N-acetyl-D-muramate 6-phosphate + H2O = N-acetyl-D-glucosamine 6-phosphate + (R)-lactate. It functions in the pathway amino-sugar metabolism; 1,6-anhydro-N-acetylmuramate degradation. Its pathway is amino-sugar metabolism; N-acetylmuramate degradation. The protein operates within cell wall biogenesis; peptidoglycan recycling. Specifically catalyzes the cleavage of the D-lactyl ether substituent of MurNAc 6-phosphate, producing GlcNAc 6-phosphate and D-lactate. Together with AnmK, is also required for the utilization of anhydro-N-acetylmuramic acid (anhMurNAc) either imported from the medium or derived from its own cell wall murein, and thus plays a role in cell wall recycling. The chain is N-acetylmuramic acid 6-phosphate etherase from Actinobacillus pleuropneumoniae serotype 5b (strain L20).